The chain runs to 1043 residues: Integrator complex subunit 3 (1043 aa).

N-acetylmethionine is present on M1. Phosphoserine is present on residues S502, S537, and S995. The segment at 977 to 1043 is disordered; the sequence is YEDSSTKPPK…GSSAVGSDSD (67 aa). The segment covering 1008–1022 has biased composition (acidic residues); the sequence is AEEESGSSSASEEED.

The protein belongs to the Integrator subunit 3 family. As to quaternary structure, component of the Integrator complex, composed of core subunits INTS1, INTS2, INTS3, INTS4, INTS5, INTS6, INTS7, INTS8, INTS9/RC74, INTS10, INTS11/CPSF3L, INTS12, INTS13, INTS14 and INTS15. The core complex associates with protein phosphatase 2A subunits PPP2CA and PPP2R1A, to form the Integrator-PP2A (INTAC) complex. Component of the SOSS complex, composed of SOSS-B (SOSS-B1/NABP2 or SOSS-B2/NABP1), SOSS-A/INTS3 and SOSS-C/INIP. SOSS complexes containing SOSS-B1/NABP2 are more abundant than complexes containing SOSS-B2/NABP1. Interacts with SOSS-B1/NABP2, SOSS-B2/NABP1 and SOSS-C/INIP; the interaction is direct. Interacts with NBN/NBS1.

It is found in the nucleus. The protein localises to the cytoplasm. Component of the integrator complex, a multiprotein complex that terminates RNA polymerase II (Pol II) transcription in the promoter-proximal region of genes. The integrator complex provides a quality checkpoint during transcription elongation by driving premature transcription termination of transcripts that are unfavorably configured for transcriptional elongation: the complex terminates transcription by (1) catalyzing dephosphorylation of the C-terminal domain (CTD) of Pol II subunit POLR2A/RPB1 and SUPT5H/SPT5, (2) degrading the exiting nascent RNA transcript via endonuclease activity and (3) promoting the release of Pol II from bound DNA. The integrator complex is also involved in terminating the synthesis of non-coding Pol II transcripts, such as enhancer RNAs (eRNAs), small nuclear RNAs (snRNAs), telomerase RNAs and long non-coding RNAs (lncRNAs). Within the integrator complex, INTS3 is involved in the post-termination step: INTS3 binds INTS7 in the open conformation of integrator complex and prevents the rebinding of Pol II to the integrator after termination cycle. Mediates recruitment of cytoplasmic dynein to the nuclear envelope, probably as component of the integrator complex. Functionally, component of the SOSS complex, a multiprotein complex that functions downstream of the MRN complex to promote DNA repair and G2/M checkpoint. The SOSS complex associates with single-stranded DNA at DNA lesions and influences diverse endpoints in the cellular DNA damage response including cell-cycle checkpoint activation, recombinational repair and maintenance of genomic stability. The SOSS complex is required for efficient homologous recombination-dependent repair of double-strand breaks (DSBs) and ATM-dependent signaling pathways. In the SOSS complex, it is required for the assembly of the complex and for stabilization of the complex at DNA damage sites. The polypeptide is Integrator complex subunit 3 (Homo sapiens (Human)).